The primary structure comprises 491 residues: Protein phosphatase ppm-1.G (491 aa).

Residues 23–486 (SYACTTMQGW…DNMTVICTTF (464 aa)) enclose the PPM-type phosphatase domain. Residues Asp57 and Gly58 each contribute to the Mn(2+) site. Over residues 112–125 (KDIGDEGKPKKAGG) the composition is skewed to basic and acidic residues. 2 disordered regions span residues 112–136 (KDIG…ADRI) and 170–294 (GDVS…EEMV). 2 stretches are compositionally biased toward acidic residues: residues 173–192 (SDDS…QDDT) and 260–294 (ATEE…EEMV). Residues Asp428 and Asp477 each coordinate Mn(2+).

This sequence belongs to the PP2C family. The cofactor is Mg(2+). Requires Mn(2+) as cofactor.

It catalyses the reaction O-phospho-L-seryl-[protein] + H2O = L-seryl-[protein] + phosphate. The enzyme catalyses O-phospho-L-threonyl-[protein] + H2O = L-threonyl-[protein] + phosphate. The protein is Protein phosphatase ppm-1.G of Caenorhabditis elegans.